The chain runs to 217 residues: Oxygen-evolving enhancer protein 3-1, chloroplastic (217 aa).

Residues M1–A68 constitute a chloroplast transit peptide.

It belongs to the PsbQ family.

Its subcellular location is the plastid. The protein resides in the chloroplast thylakoid membrane. This is Oxygen-evolving enhancer protein 3-1, chloroplastic (PSBQ1) from Zea mays (Maize).